The following is a 381-amino-acid chain: 4-hydroxyphenylpyruvate dioxygenase (381 aa).

2 consecutive VOC domains span residues 22 to 156 (GMDA…LVER) and 184 to 338 (AVDH…IFTK). 3 residues coordinate Fe cation: His-187, His-270, and Glu-349.

Belongs to the 4HPPD family. As to quaternary structure, homodimer. Requires Fe cation as cofactor.

It carries out the reaction 3-(4-hydroxyphenyl)pyruvate + O2 = homogentisate + CO2. It participates in amino-acid degradation; L-phenylalanine degradation; acetoacetate and fumarate from L-phenylalanine: step 3/6. The protein is 4-hydroxyphenylpyruvate dioxygenase (hpd) of Streptomyces coelicolor (strain ATCC BAA-471 / A3(2) / M145).